We begin with the raw amino-acid sequence, 252 residues long: Acetoacetate decarboxylase (252 aa).

Lys116 functions as the Schiff-base intermediate with acetoacetate in the catalytic mechanism.

This sequence belongs to the ADC family.

The enzyme catalyses acetoacetate + H(+) = acetone + CO2. Its function is as follows. Catalyzes the conversion of acetoacetate to acetone and carbon dioxide. The polypeptide is Acetoacetate decarboxylase (Paraburkholderia xenovorans (strain LB400)).